The following is a 237-amino-acid chain: Thiamine-phosphate synthase (237 aa).

Residues 41 to 45 (QLRDK) and Asn-73 each bind 4-amino-2-methyl-5-(diphosphooxymethyl)pyrimidine. Asp-74 and Asp-93 together coordinate Mg(2+). Position 112 (Ser-112) interacts with 4-amino-2-methyl-5-(diphosphooxymethyl)pyrimidine. 143–145 (TPT) is a 2-[(2R,5Z)-2-carboxy-4-methylthiazol-5(2H)-ylidene]ethyl phosphate binding site. 4-amino-2-methyl-5-(diphosphooxymethyl)pyrimidine is bound at residue Lys-146. 2-[(2R,5Z)-2-carboxy-4-methylthiazol-5(2H)-ylidene]ethyl phosphate is bound at residue Gly-192.

Belongs to the thiamine-phosphate synthase family. Requires Mg(2+) as cofactor.

The catalysed reaction is 2-[(2R,5Z)-2-carboxy-4-methylthiazol-5(2H)-ylidene]ethyl phosphate + 4-amino-2-methyl-5-(diphosphooxymethyl)pyrimidine + 2 H(+) = thiamine phosphate + CO2 + diphosphate. It catalyses the reaction 2-(2-carboxy-4-methylthiazol-5-yl)ethyl phosphate + 4-amino-2-methyl-5-(diphosphooxymethyl)pyrimidine + 2 H(+) = thiamine phosphate + CO2 + diphosphate. It carries out the reaction 4-methyl-5-(2-phosphooxyethyl)-thiazole + 4-amino-2-methyl-5-(diphosphooxymethyl)pyrimidine + H(+) = thiamine phosphate + diphosphate. The protein operates within cofactor biosynthesis; thiamine diphosphate biosynthesis; thiamine phosphate from 4-amino-2-methyl-5-diphosphomethylpyrimidine and 4-methyl-5-(2-phosphoethyl)-thiazole: step 1/1. Condenses 4-methyl-5-(beta-hydroxyethyl)thiazole monophosphate (THZ-P) and 2-methyl-4-amino-5-hydroxymethyl pyrimidine pyrophosphate (HMP-PP) to form thiamine monophosphate (TMP). This chain is Thiamine-phosphate synthase, found in Arthrobacter sp. (strain FB24).